We begin with the raw amino-acid sequence, 317 residues long: DNA-directed RNA polymerase subunit alpha 2 (317 aa).

Residues 1 to 227 form an alpha N-terminal domain (alpha-NTD) region; it reads MALENLLHPT…NQLRNIVDIE (227 aa). An alpha C-terminal domain (alpha-CTD) region spans residues 241–317; sequence INPILLKHVE…TLIENWPQDL (77 aa).

This sequence belongs to the RNA polymerase alpha chain family. As to quaternary structure, homodimer. The RNAP catalytic core consists of 2 alpha, 1 beta, 1 beta' and 1 omega subunit. When a sigma factor is associated with the core the holoenzyme is formed, which can initiate transcription.

The enzyme catalyses RNA(n) + a ribonucleoside 5'-triphosphate = RNA(n+1) + diphosphate. Functionally, DNA-dependent RNA polymerase catalyzes the transcription of DNA into RNA using the four ribonucleoside triphosphates as substrates. The sequence is that of DNA-directed RNA polymerase subunit alpha 2 from Francisella tularensis subsp. holarctica (strain FTNF002-00 / FTA).